Reading from the N-terminus, the 350-residue chain is Uroporphyrinogen decarboxylase (350 aa).

Substrate-binding positions include 28-32 (RQAGR), Asp-78, Tyr-154, Thr-209, and His-325.

This sequence belongs to the uroporphyrinogen decarboxylase family. Homodimer.

The protein localises to the cytoplasm. The catalysed reaction is uroporphyrinogen III + 4 H(+) = coproporphyrinogen III + 4 CO2. The protein operates within porphyrin-containing compound metabolism; protoporphyrin-IX biosynthesis; coproporphyrinogen-III from 5-aminolevulinate: step 4/4. Functionally, catalyzes the decarboxylation of four acetate groups of uroporphyrinogen-III to yield coproporphyrinogen-III. This Nitrobacter hamburgensis (strain DSM 10229 / NCIMB 13809 / X14) protein is Uroporphyrinogen decarboxylase.